The following is a 565-amino-acid chain: Small ribosomal subunit protein bS1 (565 aa).

6 S1 motif domains span residues 30-96, 114-180, 201-269, 286-356, 373-443, and 454-529; these read SSVI…LSRD, NEKV…VSRR, GQVI…LGMK, NARF…LGLK, GSTV…LGVK, and GDVK…VSIK.

The protein belongs to the bacterial ribosomal protein bS1 family. Post-translationally, the initiator methionine may be removed.

Functionally, binds mRNA; thus facilitating recognition of the initiation point. It is needed to translate mRNA with a short Shine-Dalgarno (SD) purine-rich sequence. The polypeptide is Small ribosomal subunit protein bS1 (rpsA) (Rhodopseudomonas palustris (strain ATCC BAA-98 / CGA009)).